The sequence spans 128 residues: uncharacterized protein (128 aa).

2 helical membrane-spanning segments follow: residues 45–65 (GYFHWSLITQNYIIFLFLFPF) and 95–115 (FMSHIPVLTVISYCVCCLSCF).

It is found in the membrane. This is an uncharacterized protein from Saccharomyces cerevisiae (strain ATCC 204508 / S288c) (Baker's yeast).